The following is a 49-amino-acid chain: Large ribosomal subunit protein bL33A (49 aa).

It belongs to the bacterial ribosomal protein bL33 family.

In Mycoplasmopsis agalactiae (strain NCTC 10123 / CIP 59.7 / PG2) (Mycoplasma agalactiae), this protein is Large ribosomal subunit protein bL33A.